We begin with the raw amino-acid sequence, 372 residues long: 12-oxophytodienoate reductase 1 (372 aa).

Met-1 is modified (N-acetylmethionine). Residues 31-33 (PLT), Ala-64, and Gln-106 each bind FMN. Position 183 (His-183) interacts with substrate. The active-site Proton donor is the Tyr-188. Residue Arg-235 participates in FMN binding. Position 275 (Arg-275) interacts with substrate. FMN contacts are provided by residues 303–305 (AGG) and 326–327 (GR).

Belongs to the NADH:flavin oxidoreductase/NADH oxidase family. Requires FMN as cofactor. In terms of tissue distribution, mostly expressed in roots, also present in leaves, shoots and flowers. More abundant in cotyledons. In more details, expressed in peduncles, sepals, petals, around the abscission zone of siliques, maturing siliques and developing seeds.

It is found in the cytoplasm. It catalyses the reaction (1S,2S)-OPC-8 + NADP(+) = (9S,13S,15Z)-12-oxophyto-10,15-dienoate + NADPH + H(+). Its pathway is lipid metabolism; oxylipin biosynthesis. Its function is as follows. Specifically cleaves olefinic bonds in alpha,beta-unsaturated carbonyls and may be involved in detoxification or modification of these reactive compounds. May be involved in the biosynthesis or metabolism of oxylipin signaling molecules. In vitro, reduces 9R,13R-12-oxophytodienoic acid (9R,13R-OPDA) to 9R,13R-OPC-8:0, but only poorly 9S,13S-OPDA, the natural precursor of jasmonic acid. Can detoxify the explosive 2,4,6-trinitrotoluene (TNT) in vitro and in vivo by catalyzing its nitroreduction to form hydroxylamino-dinitrotoluene (HADNT). The polypeptide is 12-oxophytodienoate reductase 1 (Arabidopsis thaliana (Mouse-ear cress)).